A 142-amino-acid chain; its full sequence is Large-conductance mechanosensitive channel (142 aa).

Transmembrane regions (helical) follow at residues 19–39 (VGII…ADLV), 41–61 (PFIA…ALDG), and 78–98 (FAFG…FVVF).

This sequence belongs to the MscL family. In terms of assembly, homopentamer.

Its subcellular location is the cell inner membrane. Its function is as follows. Channel that opens in response to stretch forces in the membrane lipid bilayer. May participate in the regulation of osmotic pressure changes within the cell. This is Large-conductance mechanosensitive channel from Roseobacter denitrificans (strain ATCC 33942 / OCh 114) (Erythrobacter sp. (strain OCh 114)).